The chain runs to 97 residues: YcgL domain-containing protein PST_1364 (97 aa).

One can recognise a YcgL domain in the interval 3 to 87; the sequence is LICSIYKSPR…AEDEYIEHLP (85 aa).

This is YcgL domain-containing protein PST_1364 from Stutzerimonas stutzeri (strain A1501) (Pseudomonas stutzeri).